The following is a 139-amino-acid chain: Orientotoxin-2 (139 aa).

Expressed by the venom gland.

The protein localises to the secreted. It carries out the reaction a 1,2-diacyl-sn-glycero-3-phosphocholine + H2O = a 1-acyl-sn-glycero-3-phosphocholine + a fatty acid + H(+). In terms of biological role, has a highly toxic phospholipase A2 activity. The protein is Orientotoxin-2 of Vespa orientalis (Oriental hornet).